Consider the following 3198-residue polypeptide: Helicase domino (3198 aa).

Residues 1 to 12 are compositionally biased toward gly residues; that stretch reads MNEGNSAGGGHE. 3 disordered regions span residues 1 to 27, 93 to 112, and 119 to 148; these read MNEGNSAGGGHEGLSPAPPAVPDRVTP, LPQQQQQTAEATAAAAAPAH, and SSTIEASVLPPQAKRQRLDDNEDRTSAASI. Over residues 134–143 the composition is skewed to basic and acidic residues; that stretch reads QRLDDNEDRT. Positions 187 to 212 form a coiled coil; sequence KKRILQQKLQILRNLKERHLENVSEY. Disordered stretches follow at residues 256-350 and 391-474; these read TSAA…SATS and GGTP…TPNS. 2 stretches are compositionally biased toward polar residues: residues 264–281 and 297–329; these read QNQKYTTQQTDSVESSLV and NISNSTVKTNTQSQVPSKIGSFTESTPAATESN. Low complexity predominate over residues 330–350; sequence SSTTVPGTATSGAATSTSATS. Over residues 391–404 the composition is skewed to polar residues; the sequence is GGTPLLPCNTSAGS. Low complexity predominate over residues 452–464; the sequence is PGTPTSGSLLSPA. The region spanning 507-579 is the HSA domain; that stretch reads LPKLQEPSRP…QELQLKRVAS (73 aa). Residues 635–848 form a disordered region; that stretch reads NKSVADTPSL…DMEEQDEQED (214 aa). Residues 638–650 are compositionally biased toward polar residues; sequence VADTPSLNSSRLT. Positions 652–664 are enriched in basic and acidic residues; it reads PKRESDDDFRPES. A phosphoserine mark is found at Ser-656, Ser-664, and Ser-666. Residues 666–696 adopt a coiled-coil conformation; the sequence is SEDDEETIAKAEEDAADVKEEVTALAKESEM. 2 stretches are compositionally biased toward basic and acidic residues: residues 672–695 and 711–721; these read TIAKAEEDAADVKEEVTALAKESE and ENRDKLMKEEQ. The residue at position 729 (Thr-729) is a Phosphothreonine. Ser-733, Ser-736, and Ser-744 each carry phosphoserine. Residues 741 to 784 adopt a coiled-coil conformation; the sequence is KEASDDDENTISKQEEAEQEIDHKKEIDELEADNDLSVEQLLAK. The segment covering 753 to 767 has biased composition (basic and acidic residues); that stretch reads KQEEAEQEIDHKKEI. The segment covering 805–831 has biased composition (acidic residues); sequence LDSDDDSTAVDSTEESEDAATEDEEDL. Phosphothreonine is present on Thr-838. The Helicase ATP-binding domain maps to 926–1091; sequence VTMNERKLNG…WSLMHFLMPY (166 aa). ATP is bound at residue 939 to 946; it reads DEMGLGKT. Residues 1471–1492 form a disordered region; that stretch reads VQKQSIANGKTEPEEETEAEDP. The Helicase C-terminal domain occupies 1662–1812; it reads TMDRLLRQLK…DMAIEGGNFT (151 aa). The interval 1828 to 1856 is disordered; the sequence is EQSEQDESSQEKSENKDRIVATTTLSDTP. The span at 1836-1846 shows a compositional bias: basic and acidic residues; sequence SQEKSENKDRI. Positions 1951–1996 form a coiled coil; sequence AAWTAEQLRAAEAELEAQKREWEANRLAAMHKEEELLKQETEAEEM. Residues 2061–2100 form a disordered region; that stretch reads KEHKRSRTDAGYDGSRRPNKMRREDNYVPPRSLFDRPTPQ. Residues 2067-2086 are compositionally biased toward basic and acidic residues; sequence RTDAGYDGSRRPNKMRREDN. Positions 2136–2205 constitute a Myb-like domain; it reads TEPEAMAEWC…QCRWRYETHI (70 aa). The interval 2318–2362 is disordered; sequence IREKQRGQQMSQPPVGVGVVQQMQQQSQQQQQPAPPPLPQQQQPQ. A compositionally biased stretch (low complexity) spans 2325-2349; the sequence is QQMSQPPVGVGVVQQMQQQSQQQQQ.

It belongs to the SNF2/RAD54 helicase family. SWR1 subfamily. Component of the Tip60 chromatin-remodeling complex which contains Domino, Tip60, Tra1, Brd8, E(Pc), DMAP1, Pontin, Reptin, Ing3, Act87E, BAP55, Mrg15, MrgBP, Gas41 and YL-1. As to expression, isoform B is present at high levels in ovary, in follicle cells, nurse cells and oocyte. Isoform B is also present in germline and somatic stem cells from the germarium. Isoform A is undetectable in adult ovary (at protein level).

It localises to the nucleus. Its function is as follows. Mediates the ATP-dependent exchange of unmodified histone H2AV for its phosphorylated and acetylated form H2AVK5acS138ph, leading to transcriptional regulation of selected genes by chromatin remodeling. Involved in Notch signaling. Represses E2F target genes. Required for somatic stem cell self-renewal but not for germline stem cell self-renewal. Involved in oogenesis. This is Helicase domino (dom) from Drosophila melanogaster (Fruit fly).